A 230-amino-acid chain; its full sequence is Ureidoacrylate amidohydrolase RutB (230 aa).

The active-site Proton acceptor is the aspartate 24. Lysine 133 is an active-site residue. Cysteine 166 (nucleophile) is an active-site residue.

The protein belongs to the isochorismatase family. RutB subfamily.

It catalyses the reaction (Z)-3-ureidoacrylate + H2O + H(+) = (Z)-3-aminoacrylate + NH4(+) + CO2. It carries out the reaction (Z)-3-ureidoacrylate + H2O = (Z)-3-aminoacrylate + carbamate + H(+). The catalysed reaction is (Z)-2-methylureidoacrylate + H2O + H(+) = (Z)-2-methylaminoacrylate + NH4(+) + CO2. Hydrolyzes ureidoacrylate to form aminoacrylate and carbamate. The carbamate hydrolyzes spontaneously, thereby releasing one of the nitrogen atoms of the pyrimidine ring as ammonia and one of its carbon atoms as CO2. This Escherichia coli O111:H- (strain 11128 / EHEC) protein is Ureidoacrylate amidohydrolase RutB.